Reading from the N-terminus, the 309-residue chain is DNA-directed RNA polymerase subunit alpha (309 aa).

The segment at 1–227 is alpha N-terminal domain (alpha-NTD); the sequence is MTFQVECVES…ALFEPLKNVS (227 aa). Positions 237 to 309 are alpha C-terminal domain (alpha-CTD); sequence EPTPESQTPI…GIKLQESKVS (73 aa).

The protein belongs to the RNA polymerase alpha chain family. As to quaternary structure, in cyanobacteria the RNAP catalytic core is composed of 2 alpha, 1 beta, 1 beta', 1 gamma and 1 omega subunit. When a sigma factor is associated with the core the holoenzyme is formed, which can initiate transcription.

It catalyses the reaction RNA(n) + a ribonucleoside 5'-triphosphate = RNA(n+1) + diphosphate. Functionally, DNA-dependent RNA polymerase catalyzes the transcription of DNA into RNA using the four ribonucleoside triphosphates as substrates. The chain is DNA-directed RNA polymerase subunit alpha from Synechococcus elongatus (strain ATCC 33912 / PCC 7942 / FACHB-805) (Anacystis nidulans R2).